The primary structure comprises 310 residues: MISEKAATALATIATVCWCVQLIPQIIYNWKKKDCTGLPPLMMFLWVVSGIPFAIYFCVSKGNVILQVQPHLFMFFCSISFVQSCYYPPISMARSKIVMIVAAIIAADVGMEVGFILWLRPLYEKGVKWPDLIFGISASVLLAVGLLPPYFELAKRKGRVIGINFAFLFIDSLGAWLSIISVILGNMDIMGIILYSIVAGMELGIFASHFIWWCRFRFLAKGNTFDEESGQAQKEEPDEKIEQDISKSDRNVTNYNLDNCSIPDDASSFADDFNIYDSTDGGTLSRAQTLHAVHGVVVRTDPDRYSRLSV.

The Cytoplasmic segment spans residues 1 to 6 (MISEKA). Positions 5 to 69 (KAATALATIA…SKGNVILQVQ (65 aa)) constitute a PQ-loop 1 domain. Residues 7–27 (ATALATIATVCWCVQLIPQII) traverse the membrane as a helical segment. Topologically, residues 28–36 (YNWKKKDCT) are extracellular. A helical transmembrane segment spans residues 37 to 57 (GLPPLMMFLWVVSGIPFAIYF). Residues 58-61 (CVSK) are Cytoplasmic-facing. Residues 62-82 (GNVILQVQPHLFMFFCSISFV) form a helical membrane-spanning segment. At 83 to 96 (QSCYYPPISMARSK) the chain is on the extracellular side. The chain crosses the membrane as a helical span at residues 97 to 117 (IVMIVAAIIAADVGMEVGFIL). Residues 118 to 131 (WLRPLYEKGVKWPD) lie on the Cytoplasmic side of the membrane. The chain crosses the membrane as a helical span at residues 132–152 (LIFGISASVLLAVGLLPPYFE). The PQ-loop 2 domain maps to 138-194 (ASVLLAVGLLPPYFELAKRKGRVIGINFAFLFIDSLGAWLSIISVILGNMDIMGIIL). Over 153-164 (LAKRKGRVIGIN) the chain is Extracellular. Residues 165–185 (FAFLFIDSLGAWLSIISVILG) form a helical membrane-spanning segment. Residues 186–191 (NMDIMG) are Cytoplasmic-facing. Residues 192–212 (IILYSIVAGMELGIFASHFIW) form a helical membrane-spanning segment. Residues 213–310 (WCRFRFLAKG…DPDRYSRLSV (98 aa)) are Extracellular-facing. At serine 229 the chain carries Phosphoserine. Residues asparagine 251 and asparagine 259 are each glycosylated (N-linked (GlcNAc...) asparagine).

It is found in the cell membrane. This is an uncharacterized protein from Saccharomyces cerevisiae (strain ATCC 204508 / S288c) (Baker's yeast).